Here is a 121-residue protein sequence, read N- to C-terminus: Large ribosomal subunit protein uL18 (121 aa).

This sequence belongs to the universal ribosomal protein uL18 family. As to quaternary structure, part of the 50S ribosomal subunit; part of the 5S rRNA/L5/L18/L25 subcomplex. Contacts the 5S and 23S rRNAs.

Functionally, this is one of the proteins that bind and probably mediate the attachment of the 5S RNA into the large ribosomal subunit, where it forms part of the central protuberance. This Paraburkholderia phytofirmans (strain DSM 17436 / LMG 22146 / PsJN) (Burkholderia phytofirmans) protein is Large ribosomal subunit protein uL18.